We begin with the raw amino-acid sequence, 35 residues long: Jingzhaotoxin F6-27.63 (35 aa).

Disulfide bonds link Cys-2/Cys-17, Cys-9/Cys-22, and Cys-16/Cys-29.

This sequence belongs to the neurotoxin 10 (Hwtx-1) family. 49 (Jztx-F6) subfamily. As to expression, expressed by the venom gland.

It localises to the secreted. In terms of biological role, probable ion channel inhibitor. This is Jingzhaotoxin F6-27.63 from Chilobrachys guangxiensis (Chinese earth tiger tarantula).